We begin with the raw amino-acid sequence, 271 residues long: Protein ABHD14A (271 aa).

The helical; Signal-anchor for type II membrane protein transmembrane segment at valine 35 to proline 55 threads the bilayer. An N-linked (GlcNAc...) asparagine glycan is attached at asparagine 67. The active-site Charge relay system is the serine 171. Asparagine 201 carries N-linked (GlcNAc...) asparagine glycosylation. Active-site charge relay system residues include aspartate 222 and histidine 249.

It belongs to the AB hydrolase superfamily. ABHD14 family.

The protein localises to the cytoplasm. It localises to the membrane. Its function is as follows. Possible role in granule neuron development. This Homo sapiens (Human) protein is Protein ABHD14A.